A 275-amino-acid chain; its full sequence is MQNETRTLQLDPHLHIEAYRFKGIMQKFPNHFHDYYVIGFIEKGQRYLACQDQEYIINPGDLLLFNPRDTHSCEQIDGRTLDYRCINVMPDIMEKAVKEITGSGHLPYFSQHVLFRHELTASLQELHILISEEKQALRKEELFLHLLEELIRHYSDVTFLSSVPEPSDEVKMVCEFLEEHYAENVTLNDLSELTGWSKYHLLRSFTKQKGITPNSYMETIRINQAKKLLEQGVRPIDAAFQTGFSDQSHMTKFFKRQVGLTPKQYMKIFEKELHR.

The 98-residue stretch at 171–268 (KMVCEFLEEH…GLTPKQYMKI (98 aa)) folds into the HTH araC/xylS-type domain. DNA-binding regions (H-T-H motif) lie at residues 188-209 (NDLSELTGWSKYHLLRSFTKQK) and 235-258 (PIDAAFQTGFSDQSHMTKFFKRQV).

This is an uncharacterized protein from Bacillus subtilis (strain 168).